The following is a 314-amino-acid chain: 4-hydroxy-3-methylbut-2-enyl diphosphate reductase (314 aa).

Cys12 is a [4Fe-4S] cluster binding site. (2E)-4-hydroxy-3-methylbut-2-enyl diphosphate-binding residues include His41 and His74. Positions 41 and 74 each coordinate dimethylallyl diphosphate. Isopentenyl diphosphate is bound by residues His41 and His74. Cys96 provides a ligand contact to [4Fe-4S] cluster. His124 lines the (2E)-4-hydroxy-3-methylbut-2-enyl diphosphate pocket. Residue His124 participates in dimethylallyl diphosphate binding. Isopentenyl diphosphate is bound at residue His124. Residue Glu126 is the Proton donor of the active site. (2E)-4-hydroxy-3-methylbut-2-enyl diphosphate is bound at residue Thr167. Cys197 serves as a coordination point for [4Fe-4S] cluster. (2E)-4-hydroxy-3-methylbut-2-enyl diphosphate is bound by residues Ser225, Ser226, Asn227, and Ser269. Residues Ser225, Ser226, Asn227, and Ser269 each contribute to the dimethylallyl diphosphate site. 4 residues coordinate isopentenyl diphosphate: Ser225, Ser226, Asn227, and Ser269.

It belongs to the IspH family. Requires [4Fe-4S] cluster as cofactor.

The enzyme catalyses isopentenyl diphosphate + 2 oxidized [2Fe-2S]-[ferredoxin] + H2O = (2E)-4-hydroxy-3-methylbut-2-enyl diphosphate + 2 reduced [2Fe-2S]-[ferredoxin] + 2 H(+). It catalyses the reaction dimethylallyl diphosphate + 2 oxidized [2Fe-2S]-[ferredoxin] + H2O = (2E)-4-hydroxy-3-methylbut-2-enyl diphosphate + 2 reduced [2Fe-2S]-[ferredoxin] + 2 H(+). Its pathway is isoprenoid biosynthesis; dimethylallyl diphosphate biosynthesis; dimethylallyl diphosphate from (2E)-4-hydroxy-3-methylbutenyl diphosphate: step 1/1. The protein operates within isoprenoid biosynthesis; isopentenyl diphosphate biosynthesis via DXP pathway; isopentenyl diphosphate from 1-deoxy-D-xylulose 5-phosphate: step 6/6. Its function is as follows. Catalyzes the conversion of 1-hydroxy-2-methyl-2-(E)-butenyl 4-diphosphate (HMBPP) into a mixture of isopentenyl diphosphate (IPP) and dimethylallyl diphosphate (DMAPP). Acts in the terminal step of the DOXP/MEP pathway for isoprenoid precursor biosynthesis. The chain is 4-hydroxy-3-methylbut-2-enyl diphosphate reductase from Haemophilus influenzae (strain PittEE).